Consider the following 184-residue polypeptide: MMKARLETEVSKYMSYVLRHAPDAAGLTLDSGGWVSFDELEKALASKYDVSRAEIIEIVENNPKKRFTLAHNRIRANQGHSVDIDLALNQAEPPAALFHGTSLTNWQSIEREGLKKMQRHHVHLSADVETAKIVAARRKGEHIILRVDAARMFSEGHSFFVSDNGVWLAESVPVQYLSRNAGTP.

This sequence belongs to the KptA/TPT1 family.

Removes the 2'-phosphate from RNA via an intermediate in which the phosphate is ADP-ribosylated by NAD followed by a presumed transesterification to release the RNA and generate ADP-ribose 1''-2''-cyclic phosphate (APPR&gt;P). May function as an ADP-ribosylase. This chain is Probable RNA 2'-phosphotransferase, found in Rhizobium johnstonii (strain DSM 114642 / LMG 32736 / 3841) (Rhizobium leguminosarum bv. viciae).